The sequence spans 290 residues: ATP synthase gamma chain (290 aa).

The protein belongs to the ATPase gamma chain family. In terms of assembly, F-type ATPases have 2 components, CF(1) - the catalytic core - and CF(0) - the membrane proton channel. CF(1) has five subunits: alpha(3), beta(3), gamma(1), delta(1), epsilon(1). CF(0) has three main subunits: a, b and c.

The protein resides in the cell inner membrane. Produces ATP from ADP in the presence of a proton gradient across the membrane. The gamma chain is believed to be important in regulating ATPase activity and the flow of protons through the CF(0) complex. This chain is ATP synthase gamma chain, found in Chelativorans sp. (strain BNC1).